The primary structure comprises 150 residues: Macrodomain Ter protein (150 aa).

Belongs to the MatP family. As to quaternary structure, homodimer.

It is found in the cytoplasm. Its function is as follows. Required for spatial organization of the terminus region of the chromosome (Ter macrodomain) during the cell cycle. Prevents early segregation of duplicated Ter macrodomains during cell division. Binds specifically to matS, which is a 13 bp signature motif repeated within the Ter macrodomain. This is Macrodomain Ter protein from Klebsiella pneumoniae (strain 342).